Reading from the N-terminus, the 394-residue chain is Methylthioribose kinase (394 aa).

ATP contacts are provided by residues asparagine 44, lysine 61, and 115–117 (EDL). Aspartate 233 provides a ligand contact to substrate. Residue 250–252 (DPE) participates in ATP binding. Arginine 337 contacts substrate.

This sequence belongs to the methylthioribose kinase family. Homodimer.

The enzyme catalyses 5-(methylsulfanyl)-D-ribose + ATP = 5-(methylsulfanyl)-alpha-D-ribose 1-phosphate + ADP + H(+). Its pathway is amino-acid biosynthesis; L-methionine biosynthesis via salvage pathway; S-methyl-5-thio-alpha-D-ribose 1-phosphate from S-methyl-5'-thioadenosine (hydrolase route): step 2/2. Functionally, catalyzes the phosphorylation of methylthioribose into methylthioribose-1-phosphate. In Bacillus velezensis (strain DSM 23117 / BGSC 10A6 / LMG 26770 / FZB42) (Bacillus amyloliquefaciens subsp. plantarum), this protein is Methylthioribose kinase.